The sequence spans 307 residues: Ribosomal RNA small subunit methyltransferase H (307 aa).

S-adenosyl-L-methionine-binding positions include 34 to 36 (GGH), aspartate 54, phenylalanine 79, aspartate 101, and glutamine 108.

Belongs to the methyltransferase superfamily. RsmH family.

The protein localises to the cytoplasm. It carries out the reaction cytidine(1402) in 16S rRNA + S-adenosyl-L-methionine = N(4)-methylcytidine(1402) in 16S rRNA + S-adenosyl-L-homocysteine + H(+). Its function is as follows. Specifically methylates the N4 position of cytidine in position 1402 (C1402) of 16S rRNA. This chain is Ribosomal RNA small subunit methyltransferase H, found in Vesicomyosocius okutanii subsp. Calyptogena okutanii (strain HA).